The following is a 61-amino-acid chain: Large ribosomal subunit protein uL30 (61 aa).

This sequence belongs to the universal ribosomal protein uL30 family. In terms of assembly, part of the 50S ribosomal subunit.

This chain is Large ribosomal subunit protein uL30, found in Chlorobium phaeobacteroides (strain BS1).